The primary structure comprises 600 residues: UvrABC system protein C (600 aa).

One can recognise a GIY-YIG domain in the interval 15-92; that stretch reads EKPGCYLMKD…IKKYQPYYNV (78 aa). Residues 197 to 232 form the UVR domain; the sequence is TSVKQDLTTKMEKASENLEFERAAEIRDQLKYIEET.

Belongs to the UvrC family. In terms of assembly, interacts with UvrB in an incision complex.

It is found in the cytoplasm. In terms of biological role, the UvrABC repair system catalyzes the recognition and processing of DNA lesions. UvrC both incises the 5' and 3' sides of the lesion. The N-terminal half is responsible for the 3' incision and the C-terminal half is responsible for the 5' incision. The protein is UvrABC system protein C of Lactobacillus acidophilus (strain ATCC 700396 / NCK56 / N2 / NCFM).